Reading from the N-terminus, the 690-residue chain is Glycine--tRNA ligase beta subunit (690 aa).

This sequence belongs to the class-II aminoacyl-tRNA synthetase family. As to quaternary structure, tetramer of two alpha and two beta subunits.

It localises to the cytoplasm. The enzyme catalyses tRNA(Gly) + glycine + ATP = glycyl-tRNA(Gly) + AMP + diphosphate. In Buchnera aphidicola subsp. Acyrthosiphon pisum (strain 5A), this protein is Glycine--tRNA ligase beta subunit.